The sequence spans 209 residues: Probable E3 ubiquitin-protein ligase NleG7 (209 aa).

It belongs to the NleG E3 ligase family. Two sizes of protein are detected in situ; only the smaller protein is secreted.

Its subcellular location is the secreted. The protein localises to the host cytoplasm. The catalysed reaction is S-ubiquitinyl-[E2 ubiquitin-conjugating enzyme]-L-cysteine + [acceptor protein]-L-lysine = [E2 ubiquitin-conjugating enzyme]-L-cysteine + N(6)-ubiquitinyl-[acceptor protein]-L-lysine.. Functionally, effector proteins function to alter host cell physiology and promote bacterial survival in host tissues. This protein is probably an E3 ubiquitin-protein ligase that interferes with the host's ubiquitination pathway and targets host proteins for proteasomal degradation. Mice infected with a strain of bacteria deleted for this gene were colonized less quickly by bacteria. This Citrobacter rodentium protein is Probable E3 ubiquitin-protein ligase NleG7.